The chain runs to 345 residues: DNA-directed RNA polymerases I and III subunit rpac1 (345 aa).

Positions 1 to 11 (MVNKSTTNGVS) are enriched in polar residues. A disordered region spans residues 1 to 20 (MVNKSTTNGVSDPNLENKRT).

It belongs to the archaeal Rpo3/eukaryotic RPB3 RNA polymerase subunit family. In terms of assembly, component of the RNA polymerase I (Pol I) and RNA polymerase III (Pol III) complexes consisting of at least 13 and 17 subunits, respectively. Interacts with RPAC19/RPAC2.

The protein localises to the nucleus. Functionally, DNA-dependent RNA polymerase catalyzes the transcription of DNA into RNA using the four ribonucleoside triphosphates as substrates. Common component of RNA polymerases I and III which synthesize ribosomal RNA precursors and small RNAs, such as 5S rRNA and tRNAs, respectively. RPAC1 is part of the Pol core element with the central large cleft and probably a clamp element that moves to open and close the cleft. In Dictyostelium discoideum (Social amoeba), this protein is DNA-directed RNA polymerases I and III subunit rpac1 (polr1c).